Reading from the N-terminus, the 245-residue chain is Thiopurine S-methyltransferase (245 aa).

Residue 29-40 (WREKWVDGKIGF) participates in S-adenosyl-L-methionine binding. F40 is a binding site for substrate. K58 is modified (N6-acetyllysine). 3 residues coordinate S-adenosyl-L-methionine: L69, E90, and R152.

The protein belongs to the class I-like SAM-binding methyltransferase superfamily. TPMT family. As to quaternary structure, monomer.

Its subcellular location is the cytoplasm. It catalyses the reaction S-adenosyl-L-methionine + a thiopurine = S-adenosyl-L-homocysteine + a thiopurine S-methylether.. In Felis catus (Cat), this protein is Thiopurine S-methyltransferase (TPMT).